The sequence spans 134 residues: D-ribose pyranase (134 aa).

The Proton donor role is filled by histidine 20. Substrate is bound by residues aspartate 28, histidine 101, and 123 to 125 (YSN).

Belongs to the RbsD / FucU family. RbsD subfamily. As to quaternary structure, homodecamer.

The protein localises to the cytoplasm. It carries out the reaction beta-D-ribopyranose = beta-D-ribofuranose. It participates in carbohydrate metabolism; D-ribose degradation; D-ribose 5-phosphate from beta-D-ribopyranose: step 1/2. Its function is as follows. Catalyzes the interconversion of beta-pyran and beta-furan forms of D-ribose. The chain is D-ribose pyranase from Pseudomonas syringae pv. syringae (strain B728a).